The following is a 560-amino-acid chain: Ubiquitin carboxyl-terminal hydrolase MINDY-3 homolog (560 aa).

The span at 1 to 13 (MNEKIVREQRGGE) shows a compositional bias: basic and acidic residues. 2 disordered regions span residues 1–30 (MNEK…AASA) and 44–91 (SHKT…MLNA). 2 stretches are compositionally biased toward low complexity: residues 15-30 (SPSS…AASA) and 52-81 (TASS…SSSS). Catalysis depends on Cys-139, which acts as the Nucleophile. Residues 203–237 (TEAGSTKKRSPAGEEESALAGQAAGSSEEVEEAAE) are disordered. Residues Ser-212 and Ser-219 each carry the phosphoserine modification. The active-site Proton acceptor is His-403.

It belongs to the MINDY deubiquitinase family. FAM188 subfamily.

The enzyme catalyses Thiol-dependent hydrolysis of ester, thioester, amide, peptide and isopeptide bonds formed by the C-terminal Gly of ubiquitin (a 76-residue protein attached to proteins as an intracellular targeting signal).. In terms of biological role, hydrolase that can remove 'Lys-48'-linked conjugated ubiquitin from proteins. The protein is Ubiquitin carboxyl-terminal hydrolase MINDY-3 homolog (mindy3) of Drosophila melanogaster (Fruit fly).